The sequence spans 250 residues: Ubiquinone/menaquinone biosynthesis C-methyltransferase UbiE (250 aa).

S-adenosyl-L-methionine is bound by residues Thr73, Asp94, 122 to 123 (NA), and Ser139.

It belongs to the class I-like SAM-binding methyltransferase superfamily. MenG/UbiE family.

It catalyses the reaction a 2-demethylmenaquinol + S-adenosyl-L-methionine = a menaquinol + S-adenosyl-L-homocysteine + H(+). The enzyme catalyses a 2-methoxy-6-(all-trans-polyprenyl)benzene-1,4-diol + S-adenosyl-L-methionine = a 5-methoxy-2-methyl-3-(all-trans-polyprenyl)benzene-1,4-diol + S-adenosyl-L-homocysteine + H(+). Its pathway is quinol/quinone metabolism; menaquinone biosynthesis; menaquinol from 1,4-dihydroxy-2-naphthoate: step 2/2. The protein operates within cofactor biosynthesis; ubiquinone biosynthesis. Methyltransferase required for the conversion of demethylmenaquinol (DMKH2) to menaquinol (MKH2) and the conversion of 2-polyprenyl-6-methoxy-1,4-benzoquinol (DDMQH2) to 2-polyprenyl-3-methyl-6-methoxy-1,4-benzoquinol (DMQH2). This Francisella tularensis subsp. mediasiatica (strain FSC147) protein is Ubiquinone/menaquinone biosynthesis C-methyltransferase UbiE.